We begin with the raw amino-acid sequence, 118 residues long: MPRVKRGVQARARHKKVLKQAKGYYGARSRVYRVAVQAVTKAGQYAYRDRRQRKRVFRQLWITRINAASRISGLSYSRFINGLKKASVEIDRKILADIAVFDKATFAHLVEVAKKALA.

The protein belongs to the bacterial ribosomal protein bL20 family.

Functionally, binds directly to 23S ribosomal RNA and is necessary for the in vitro assembly process of the 50S ribosomal subunit. It is not involved in the protein synthesizing functions of that subunit. The polypeptide is Large ribosomal subunit protein bL20 (Psychromonas ingrahamii (strain DSM 17664 / CCUG 51855 / 37)).